The chain runs to 302 residues: Bifunctional ligase/repressor BirA (302 aa).

A DNA-binding region (H-T-H motif) is located at residues Gln-14–Gln-33. The BPL/LPL catalytic domain occupies Gln-62–Glu-236. Biotin is bound by residues Ser-80 to Asn-82, Gln-103, Arg-107 to Arg-109, and Lys-167.

Belongs to the biotin--protein ligase family.

The catalysed reaction is biotin + L-lysyl-[protein] + ATP = N(6)-biotinyl-L-lysyl-[protein] + AMP + diphosphate + H(+). Functionally, acts both as a biotin--[acetyl-CoA-carboxylase] ligase and a biotin-operon repressor. In the presence of ATP, BirA activates biotin to form the BirA-biotinyl-5'-adenylate (BirA-bio-5'-AMP or holoBirA) complex. HoloBirA can either transfer the biotinyl moiety to the biotin carboxyl carrier protein (BCCP) subunit of acetyl-CoA carboxylase, or bind to the biotin operator site and inhibit transcription of the operon. The sequence is that of Bifunctional ligase/repressor BirA from Haemophilus influenzae (strain ATCC 51907 / DSM 11121 / KW20 / Rd).